A 1013-amino-acid chain; its full sequence is Ephrin type-B receptor 6 (1013 aa).

The signal sequence occupies residues 1–31; it reads MASENTAGSGSRVAGMVYSLWLLVLGPSVLA. Topologically, residues 32–590 are extracellular; sequence LEEVLLDTTG…LPEKLSLVIG (559 aa). Residues 33–231 form the Eph LBD domain; it reads EEVLLDTTGE…FSYTCPSVLR (199 aa). Fibronectin type-III domains follow at residues 363-478 and 479-574; these read PPSA…TSHE and VPSA…TLPQ. A glycan (N-linked (GlcNAc...) asparagine) is linked at Asn-472. The chain crosses the membrane as a helical span at residues 591 to 611; sequence SILGALAFLLLAAITVLAVIF. Residues 612-1013 are Cytoplasmic-facing; the sequence is QRKRRGTGYT…HLRQPGSVEV (402 aa). The region spanning 662-911 is the Protein kinase domain; the sequence is IKIEEVIGAG…QLVAAFDKMI (250 aa). ATP is bound at residue 668–676; the sequence is IGAGSFGEV. One can recognise an SAM domain in the interval 940–1004; sequence PCLDSPQAWL…LHNIQLLQQH (65 aa). Residues 1011-1013 carry the PDZ-binding motif; it reads VEV.

Belongs to the protein kinase superfamily. Tyr protein kinase family. Ephrin receptor subfamily. In terms of assembly, interacts with CBL and EPHB1. Interacts with FYN; this interaction takes place in a ligand-independent manner. Ligand-binding increases phosphorylation on tyrosine residues. Phosphorylation on tyrosine residues is mediated by transphosphorylation by the catalytically active EPHB1 in a ligand-independent manner. Tyrosine phosphorylation of the receptor may act as a switch on the functional transition from cell adhesion/attraction to de-adhesion/repulsion.

Its subcellular location is the membrane. Kinase-defective receptor for members of the ephrin-B family. Binds to ephrin-B1 and ephrin-B2. Modulates cell adhesion and migration by exerting both positive and negative effects upon stimulation with ephrin-B2. Inhibits JNK activation, T-cell receptor-induced IL-2 secretion and CD25 expression upon stimulation with ephrin-B2. The chain is Ephrin type-B receptor 6 (Ephb6) from Rattus norvegicus (Rat).